Here is a 265-residue protein sequence, read N- to C-terminus: Glutamate racemase (265 aa).

Residues 9–10 (DS) and 41–42 (YG) contribute to the substrate site. The active-site Proton donor/acceptor is cysteine 73. 74 to 75 (NT) serves as a coordination point for substrate. Residue cysteine 180 is the Proton donor/acceptor of the active site. Position 181 to 182 (181 to 182 (TH)) interacts with substrate.

This sequence belongs to the aspartate/glutamate racemases family.

The catalysed reaction is L-glutamate = D-glutamate. It functions in the pathway cell wall biogenesis; peptidoglycan biosynthesis. Its function is as follows. Provides the (R)-glutamate required for cell wall biosynthesis. This Aliivibrio salmonicida (strain LFI1238) (Vibrio salmonicida (strain LFI1238)) protein is Glutamate racemase.